The primary structure comprises 2606 residues: Large tegument protein deneddylase (2606 aa).

A deubiquitination activity region spans residues 1 to 235 (MAFQAQTDTG…LKRSGAYVNL (235 aa)). One can recognise a Peptidase C76 domain in the interval 14–225 (LATASSHQGD…LLANYGIASA (212 aa)). Catalysis depends on residues C34, D163, and H165. Disordered regions lie at residues 318–349 (IAISPLHSNTESDDSETGKKNTPVKITKPNEA), 390–411 (DTDSLLSTHESPPATPSLKSGQ), 1020–1135 (KKGL…ESSE), 2253–2316 (PEIH…PTPL), and 2434–2458 (PPHDFVEPVENGDPPGPPGSEERKY). Polar residues predominate over residues 1038–1050 (TPVTDSKLIQDSQ). The span at 1051-1061 (QNDRHQKEKPL) shows a compositional bias: basic and acidic residues. Over residues 1085-1097 (KPQNLSLPVSTNK) the composition is skewed to polar residues. A compositionally biased stretch (low complexity) spans 1105–1132 (ESSPIESTSPSHSPVSSMESQNGSFSLE). A compositionally biased stretch (pro residues) spans 2304–2316 (PNPPRPTTFPTPL).

The protein belongs to the herpesviridae large tegument protein family. In terms of assembly, interacts with host CUL1 and CUL4A; these interactions inhibit the E3 ligase activity of cullins. Interacts with inner tegument protein. Interacts with capsid vertex specific component CVC2. Interacts with the major capsid protein/MCP.

Its subcellular location is the virion tegument. The protein localises to the host cytoplasm. It localises to the host nucleus. It catalyses the reaction Thiol-dependent hydrolysis of ester, thioester, amide, peptide and isopeptide bonds formed by the C-terminal Gly of ubiquitin (a 76-residue protein attached to proteins as an intracellular targeting signal).. In terms of biological role, large tegument protein that plays multiple roles in the viral cycle. During viral entry, remains associated with the capsid while most of the tegument is detached and participates in the capsid transport toward the host nucleus. Plays a role in the routing of the capsid at the nuclear pore complex and subsequent uncoating. Within the host nucleus, acts as a deneddylase and promotes the degradation of nuclear CRLs (cullin-RING ubiquitin ligases) and thereby stabilizes nuclear CRL substrates, while cytoplasmic CRLs remain unaffected. These modifications prevent host cell cycle S-phase progression and create a favorable environment allowing efficient viral genome replication. Participates later in the secondary envelopment of capsids. Indeed, plays a linker role for the association of the outer viral tegument to the capsids together with the inner tegument protein. This is Large tegument protein deneddylase (64) from Connochaetes taurinus (Blue wildebeest).